The sequence spans 407 residues: Aminoacylase-1 (407 aa).

Ala-2 is subject to N-acetylalanine. His-80 contacts Zn(2+). The active site involves Asp-82. A Zn(2+)-binding site is contributed by Asp-113. Residue Glu-147 is the Proton acceptor of the active site. The Zn(2+) site is built by Glu-148, Glu-175, and His-372.

This sequence belongs to the peptidase M20A family. In terms of assembly, homodimer. Interacts with SPHK1. The cofactor is Zn(2+).

The protein resides in the cytoplasm. It carries out the reaction an N-acyl-L-amino acid + H2O = an L-alpha-amino acid + a carboxylate. It catalyses the reaction N-acetyl-L-methionine + H2O = L-methionine + acetate. The catalysed reaction is N-acetyl-L-glutamine + H2O = L-glutamine + acetate. Its function is as follows. Catalyzes the hydrolysis of N-acetylated amino acids to acetate and free amino acids. This chain is Aminoacylase-1 (ACY1), found in Sus scrofa (Pig).